A 184-amino-acid chain; its full sequence is Photosystem I assembly protein Ycf4 (184 aa).

2 helical membrane passes run 19 to 39 (ISNFCWAFILFLGSLGFLLVG) and 57 to 77 (IIFFPQGLVMSFYGIAGLFIS).

It belongs to the Ycf4 family.

It localises to the plastid. Its subcellular location is the chloroplast thylakoid membrane. Functionally, seems to be required for the assembly of the photosystem I complex. This chain is Photosystem I assembly protein Ycf4, found in Nicotiana sylvestris (Wood tobacco).